The following is a 186-amino-acid chain: ATP synthase subunit b (186 aa).

Residues 5–25 form a helical membrane-spanning segment; that stretch reads LILNLLVLLAPAAVFAAGGGH.

Belongs to the ATPase B chain family. As to quaternary structure, F-type ATPases have 2 components, F(1) - the catalytic core - and F(0) - the membrane proton channel. F(1) has five subunits: alpha(3), beta(3), gamma(1), delta(1), epsilon(1). F(0) has three main subunits: a(1), b(2) and c(10-14). The alpha and beta chains form an alternating ring which encloses part of the gamma chain. F(1) is attached to F(0) by a central stalk formed by the gamma and epsilon chains, while a peripheral stalk is formed by the delta and b chains.

Its subcellular location is the cell inner membrane. Functionally, f(1)F(0) ATP synthase produces ATP from ADP in the presence of a proton or sodium gradient. F-type ATPases consist of two structural domains, F(1) containing the extramembraneous catalytic core and F(0) containing the membrane proton channel, linked together by a central stalk and a peripheral stalk. During catalysis, ATP synthesis in the catalytic domain of F(1) is coupled via a rotary mechanism of the central stalk subunits to proton translocation. Its function is as follows. Component of the F(0) channel, it forms part of the peripheral stalk, linking F(1) to F(0). This is ATP synthase subunit b from Bdellovibrio bacteriovorus (strain ATCC 15356 / DSM 50701 / NCIMB 9529 / HD100).